The chain runs to 374 residues: Flagellar P-ring protein (374 aa).

An N-terminal signal peptide occupies residues 1–29 (MSGLGFTGVVRIAVMALLALAFLGAPAHA). Over residues 296 to 311 (ESPQVSQPNPLSNGRT) the composition is skewed to polar residues. A disordered region spans residues 296-316 (ESPQVSQPNPLSNGRTVMTPR).

It belongs to the FlgI family. In terms of assembly, the basal body constitutes a major portion of the flagellar organelle and consists of four rings (L,P,S, and M) mounted on a central rod.

The protein resides in the periplasm. Its subcellular location is the bacterial flagellum basal body. Functionally, assembles around the rod to form the L-ring and probably protects the motor/basal body from shearing forces during rotation. The chain is Flagellar P-ring protein from Nitrobacter winogradskyi (strain ATCC 25391 / DSM 10237 / CIP 104748 / NCIMB 11846 / Nb-255).